The chain runs to 1828 residues: InaD-like protein (1828 aa).

The 61-residue stretch at 5–65 (PAPDKLQVLQ…SIKQLKGQLS (61 aa)) folds into the L27 domain. 3 consecutive PDZ domains span residues 134–221 (YIDI…AREP), 248–328 (DVEL…ARDP), and 365–453 (GVEL…VRRK). Residues Ser-459 and Ser-522 each carry the phosphoserine modification. Residues 553 to 639 (DAELQKYSKL…PFTLVCCRRL (87 aa)) enclose the PDZ 4 domain. The residue at position 645 (Ser-645) is a Phosphoserine. 2 PDZ domains span residues 686 to 758 (IVEL…EVLK) and 1070 to 1162 (IVEI…QSLS). The tract at residues 1168–1220 (IPSVHNKANKIANNQDQNTEEKKEKRQGTPPPPMKLPPPYKAPSDDSDENEEE) is disordered. The segment covering 1196–1208 (TPPPPMKLPPPYK) has biased composition (pro residues). Ser-1211 is subject to Phosphoserine. The PDZ 7 domain occupies 1241–1324 (IIELEKDKNG…KVKLVFIRNE (84 aa)). Positions 1333-1362 (APFPVPSSSPSSLEDQSGTEPVSSEEDGSL) are disordered. Over residues 1345–1354 (LEDQSGTEPV) the composition is skewed to polar residues. 2 consecutive PDZ domains span residues 1464-1547 (IIEI…YRDE) and 1560-1642 (PVDL…GRLR). Residue Thr-1535 is modified to Phosphothreonine. Over residues 1645–1668 (SWTSSRKTSQNSQGSQHSTHSSFH) the composition is skewed to polar residues. Residues 1645-1669 (SWTSSRKTSQNSQGSQHSTHSSFHP) are disordered. One can recognise a PDZ 10 domain in the interval 1703–1789 (TVEIIRELSD…RIILQVVADT (87 aa)). A disordered region spans residues 1805 to 1828 (YHLGSPTAEHHPEDTEEPLQMTAG).

In terms of assembly, forms a ternary complex with PALS1 and CRB1. Component of a complex whose core is composed of ARHGAP17, AMOT, PALS1, INADL/PATJ and PARD3/PAR3. Forms a heterotrimeric complex composed of MMP5, LIN7B and PATJ; the N-terminal L27 domain of PALS1 interacts with the L27 domain of PATJ and the C-terminal L27 domain of PALS1 interacts with the L27 domain of LIN7B. Component of a complex composed of CRB3, PALS1 and PATJ. As part of the Crumbs complex; interacts with WWP1, the interaction is enhanced by AMOTL2 and facilitates WWP1 localization to the plasma membrane. The Crumbs complex promotes monoubiquitination of AMOTL2 by WWP1, which activates the Hippo signaling pathway. Interacts (via N-terminus) with PALS1/PALS (via PDZ domain). Interacts with TJP3/ZO-3 and CLDN1/claudin-1. Interacts with ASIC3, KCNJ10, KCNJ15, GRIN2A, GRIN2B, GRIN2C, GRIN2D, NLGN2, and HTR2A. Interacts with MPP7. Directly interacts with HTR4. Interacts (via PDZ domain 8) with WWC1 (via the ADDV motif). Interacts with SLC6A4. Interacts (via C-terminus) with ARHGEF18. Interacts with NPHP1. Interacts with PARD3/PAR3. Interacts (via PDZ1-6 domains) with TJP1/ZO1; the interaction is required for attachment and extension of TJP1/ZO1 condensates along the apical cell interface.

Its subcellular location is the cell junction. It localises to the tight junction. The protein localises to the apical cell membrane. It is found in the cytoplasm. The protein resides in the perinuclear region. Its function is as follows. Scaffolding protein that facilitates the localization of proteins to the cell membrane. Required for the correct formation of tight junctions and epithelial apico-basal polarity. Acts (via its L27 domain) as an apical connector and elongation factor for multistranded TJP1/ZO1 condensates that form a tight junction belt, thereby required for the formation of the tight junction-mediated cell barrier. Positively regulates epithelial cell microtubule elongation and cell migration, possibly via facilitating localization of PRKCI/aPKC and PAR3D/PAR3 at the leading edge of migrating cells. Plays a role in the correct reorientation of the microtubule-organizing center during epithelial migration. May regulate the surface expression and/or function of ASIC3 in sensory neurons. May recruit ARHGEF18 to apical cell-cell boundaries. The sequence is that of InaD-like protein from Canis lupus familiaris (Dog).